Here is a 504-residue protein sequence, read N- to C-terminus: Signal transduction histidine-protein kinase/phosphatase MprB (504 aa).

The Cytoplasmic segment spans residues 1–26 (MWWFRRRDRAPLRATSSLSLRWRVML). A helical transmembrane segment spans residues 27 to 47 (LAMSMVAMVVVLMSFAVYAVI). Residues 48–163 (SAALYSDIDN…PTEAVMNKLR (116 aa)) are Extracellular-facing. A helical transmembrane segment spans residues 164-184 (WVLLIVGGIGVAVAAVAGGMV). At 185–504 (TRAGLRPVGR…SVESQSTRAT (320 aa)) the chain is on the cytoplasmic side. In terms of domain architecture, HAMP spans 186-238 (RAGLRPVGRLTEAAERVARTDDLRPIPVFGSDELARLTEAFNLMLRALAESRE). One can recognise a Histidine kinase domain in the interval 246–466 (DAGHELRTPL…SIYVLLPGRR (221 aa)). Histidine 249 is subject to Phosphohistidine; by autocatalysis. The segment at 471–504 (QLPGATAGARSTDIENSRGSANVISVESQSTRAT) is disordered. Residues 487-504 (SRGSANVISVESQSTRAT) show a composition bias toward polar residues.

Mg(2+) is required as a cofactor. The cofactor is Mn(2+). Post-translationally, autophosphorylated.

It is found in the cell membrane. It carries out the reaction ATP + protein L-histidine = ADP + protein N-phospho-L-histidine.. Its function is as follows. Member of the two-component regulatory system MprB/MprA which contributes to maintaining a balance among several systems involved in stress resistance and is required for establishment and maintenance of persistent infection in the host. In response to environmental signals MprB acts both as a membrane-associated protein kinase that undergoes autophosphorylation and subsequently transfers the phosphate to MprA, and a protein phosphatase that dephosphorylates phospho-MprA. MprB/MprA up-regulates expression of mprA and pepD. The polypeptide is Signal transduction histidine-protein kinase/phosphatase MprB (mprB) (Mycobacterium bovis (strain ATCC BAA-935 / AF2122/97)).